The sequence spans 406 residues: Probable 4-hydroxyphenylpyruvate dioxygenase 2 (406 aa).

2 VOC domains span residues 22-174 (GFDH…LINR) and 205-363 (EIDH…IFSK). The Fe cation site is built by His-208, His-291, and Glu-374.

This sequence belongs to the 4HPPD family. The cofactor is Fe cation.

It carries out the reaction 3-(4-hydroxyphenyl)pyruvate + O2 = homogentisate + CO2. It functions in the pathway amino-acid degradation; L-phenylalanine degradation; acetoacetate and fumarate from L-phenylalanine: step 3/6. The sequence is that of Probable 4-hydroxyphenylpyruvate dioxygenase 2 from Aspergillus fumigatus (strain ATCC MYA-4609 / CBS 101355 / FGSC A1100 / Af293) (Neosartorya fumigata).